We begin with the raw amino-acid sequence, 219 residues long: MGNLFVKKPQITEVDRAILSLKTQRRKLGQYQQKLEKVIEAEKQAARDLIREKRKDRALLALRKKRTQEELLKQVDQWVINVEQQLTDIELTSKQKAVFESLKQGNSAIKAIQSELDLDDVQKLMDDTADAKAYQDELNAILGEKLSAEDEEDILAEFDNLESQLIVDEMPEVPTKESEESEKLDLPDVPTKTPVASNAEITPAESATKTKVLEEPLPA.

Residues 20–60 adopt a coiled-coil conformation; it reads SLKTQRRKLGQYQQKLEKVIEAEKQAARDLIREKRKDRALL. Residues 171–219 are disordered; that stretch reads PEVPTKESEESEKLDLPDVPTKTPVASNAEITPAESATKTKVLEEPLPA. Residues 174–186 show a composition bias toward basic and acidic residues; that stretch reads PTKESEESEKLDL. Over residues 194 to 209 the composition is skewed to polar residues; the sequence is PVASNAEITPAESATK.

It belongs to the SNF7 family. In terms of assembly, component of the endosomal sorting required for transport complex III (ESCRT-III), composed at least of VPS2, VPS20, VPS24 and VPS32. Interacts with SKD1.

The protein localises to the endosome. Component of the ESCRT-III complex, which is required for multivesicular bodies (MVBs) formation and sorting of endosomal cargo proteins into MVBs. The ESCRT-III complex is probably involved in the concentration of MVB cargo. The protein is Vacuolar protein sorting-associated protein 20 homolog 1 (VPS20.1) of Arabidopsis thaliana (Mouse-ear cress).